A 397-amino-acid chain; its full sequence is Metal tolerance protein 4 (397 aa).

Positions 1 to 19 (MEAKGENDARAPLLAERRR) are enriched in basic and acidic residues. A disordered region spans residues 1-27 (MEAKGENDARAPLLAERRRNSVGSMRG). Topologically, residues 1-104 (MEAKGENDAR…EQKQSEFAMK (104 aa)) are cytoplasmic. A helical membrane pass occupies residues 105–122 (ISNYANMILLALKIYATI). Over 123-126 (KSGS) the chain is Vacuolar. The chain crosses the membrane as a helical span at residues 127 to 147 (IAIAASTLDSLLDLMAGGILW). Residues 148 to 170 (FTHLSMKSINVYKYPIGKLRVQP) lie on the Cytoplasmic side of the membrane. Residues 171–191 (VGIIIFAAVMATLGFQVFVQA) form a helical membrane-spanning segment. At 192-208 (VEKLIVNETPDKLTPVQ) the chain is on the vacuolar side. Residues 209 to 229 (LTWLYSIMIFATVVKLALWLY) traverse the membrane as a helical segment. At 230–248 (CRTSGNKIVRAYAKDHYFD) the chain is on the cytoplasmic side. The helical transmembrane segment at 249 to 269 (VVTNVVGLAAAVLGDMFYWWI) threads the bilayer. Position 270 (Asp270) is a topological domain, vacuolar. The chain crosses the membrane as a helical span at residues 271–291 (PVGAIALAVYTITNWSGTVWE). Topologically, residues 292–397 (NAVSLVGESA…ILSKLPSSQP (106 aa)) are cytoplasmic.

This sequence belongs to the cation diffusion facilitator (CDF) transporter (TC 2.A.4) family. SLC30A subfamily.

The protein resides in the vacuole membrane. Involved in sequestration of excess metal in the cytoplasm into vacuoles to maintain metal homeostasis. The protein is Metal tolerance protein 4 (MTP4) of Oryza sativa subsp. japonica (Rice).